We begin with the raw amino-acid sequence, 218 residues long: Ribose-5-phosphate isomerase A (218 aa).

Substrate-binding positions include 28–31, 81–84, and 94–97; these read TGST, DGAD, and KGGG. Glu103 acts as the Proton acceptor in catalysis. A substrate-binding site is contributed by Lys121.

It belongs to the ribose 5-phosphate isomerase family. In terms of assembly, homodimer.

The enzyme catalyses aldehydo-D-ribose 5-phosphate = D-ribulose 5-phosphate. It participates in carbohydrate degradation; pentose phosphate pathway; D-ribose 5-phosphate from D-ribulose 5-phosphate (non-oxidative stage): step 1/1. In terms of biological role, catalyzes the reversible conversion of ribose-5-phosphate to ribulose 5-phosphate. The polypeptide is Ribose-5-phosphate isomerase A (Vibrio parahaemolyticus serotype O3:K6 (strain RIMD 2210633)).